Reading from the N-terminus, the 65-residue chain is UPF0434 protein BQ10150 (65 aa).

Belongs to the UPF0434 family.

In Bartonella quintana (strain Toulouse) (Rochalimaea quintana), this protein is UPF0434 protein BQ10150.